The primary structure comprises 62 residues: Photosystem II reaction center protein K (62 aa).

A propeptide spanning residues 1 to 25 is cleaved from the precursor; it reads MPNILSLTCICFNSVLYPTTSFFFA. Residues 33–53 traverse the membrane as a helical segment; that stretch reads IFNPIVDVMPVIPLFFFLLAF.

Belongs to the PsbK family. As to quaternary structure, PSII is composed of 1 copy each of membrane proteins PsbA, PsbB, PsbC, PsbD, PsbE, PsbF, PsbH, PsbI, PsbJ, PsbK, PsbL, PsbM, PsbT, PsbX, PsbY, PsbZ, Psb30/Ycf12, at least 3 peripheral proteins of the oxygen-evolving complex and a large number of cofactors. It forms dimeric complexes.

The protein resides in the plastid. It localises to the chloroplast thylakoid membrane. Functionally, one of the components of the core complex of photosystem II (PSII). PSII is a light-driven water:plastoquinone oxidoreductase that uses light energy to abstract electrons from H(2)O, generating O(2) and a proton gradient subsequently used for ATP formation. It consists of a core antenna complex that captures photons, and an electron transfer chain that converts photonic excitation into a charge separation. In Agrostis stolonifera (Creeping bentgrass), this protein is Photosystem II reaction center protein K.